Reading from the N-terminus, the 425-residue chain is Enolase (425 aa).

Gln-162 lines the (2R)-2-phosphoglycerate pocket. Glu-204 acts as the Proton donor in catalysis. Residues Asp-241, Glu-284, and Asp-311 each contribute to the Mg(2+) site. Residues Lys-336, Arg-365, Ser-366, and Lys-387 each coordinate (2R)-2-phosphoglycerate. Lys-336 functions as the Proton acceptor in the catalytic mechanism.

This sequence belongs to the enolase family. Mg(2+) serves as cofactor.

Its subcellular location is the cytoplasm. It is found in the secreted. It localises to the cell surface. The enzyme catalyses (2R)-2-phosphoglycerate = phosphoenolpyruvate + H2O. The protein operates within carbohydrate degradation; glycolysis; pyruvate from D-glyceraldehyde 3-phosphate: step 4/5. In terms of biological role, catalyzes the reversible conversion of 2-phosphoglycerate (2-PG) into phosphoenolpyruvate (PEP). It is essential for the degradation of carbohydrates via glycolysis. This chain is Enolase, found in Brucella anthropi (strain ATCC 49188 / DSM 6882 / CCUG 24695 / JCM 21032 / LMG 3331 / NBRC 15819 / NCTC 12168 / Alc 37) (Ochrobactrum anthropi).